The sequence spans 396 residues: Succinyl-diaminopimelate desuccinylase (396 aa).

Position 74 (His74) interacts with Zn(2+). Asp76 is a catalytic residue. Position 107 (Asp107) interacts with Zn(2+). Glu142 serves as the catalytic Proton acceptor. Zn(2+) contacts are provided by Glu143, Glu171, and His360.

The protein belongs to the peptidase M20A family. DapE subfamily. As to quaternary structure, homodimer. Zn(2+) is required as a cofactor. It depends on Co(2+) as a cofactor.

The enzyme catalyses N-succinyl-(2S,6S)-2,6-diaminopimelate + H2O = (2S,6S)-2,6-diaminopimelate + succinate. It functions in the pathway amino-acid biosynthesis; L-lysine biosynthesis via DAP pathway; LL-2,6-diaminopimelate from (S)-tetrahydrodipicolinate (succinylase route): step 3/3. Catalyzes the hydrolysis of N-succinyl-L,L-diaminopimelic acid (SDAP), forming succinate and LL-2,6-diaminopimelate (DAP), an intermediate involved in the bacterial biosynthesis of lysine and meso-diaminopimelic acid, an essential component of bacterial cell walls. This Methylobacterium sp. (strain 4-46) protein is Succinyl-diaminopimelate desuccinylase.